A 158-amino-acid chain; its full sequence is Cyclic pyranopterin monophosphate synthase (158 aa).

Substrate-binding positions include 74–76 (MCH) and 112–113 (ME). D127 is a catalytic residue.

It belongs to the MoaC family. In terms of assembly, homohexamer; trimer of dimers.

The enzyme catalyses (8S)-3',8-cyclo-7,8-dihydroguanosine 5'-triphosphate = cyclic pyranopterin phosphate + diphosphate. The protein operates within cofactor biosynthesis; molybdopterin biosynthesis. Functionally, catalyzes the conversion of (8S)-3',8-cyclo-7,8-dihydroguanosine 5'-triphosphate to cyclic pyranopterin monophosphate (cPMP). In Helicobacter pylori (strain G27), this protein is Cyclic pyranopterin monophosphate synthase.